The primary structure comprises 376 residues: Glucose-1-phosphate adenylyltransferase (376 aa).

Alpha-D-glucose 1-phosphate contacts are provided by residues Tyr101, Gly166, Glu181–Lys182, and Ser192.

Belongs to the bacterial/plant glucose-1-phosphate adenylyltransferase family. In terms of assembly, homotetramer.

The enzyme catalyses alpha-D-glucose 1-phosphate + ATP + H(+) = ADP-alpha-D-glucose + diphosphate. It participates in glycan biosynthesis; glycogen biosynthesis. Involved in the biosynthesis of ADP-glucose, a building block required for the elongation reactions to produce glycogen. Catalyzes the reaction between ATP and alpha-D-glucose 1-phosphate (G1P) to produce pyrophosphate and ADP-Glc. The polypeptide is Glucose-1-phosphate adenylyltransferase (Bacillus mycoides (strain KBAB4) (Bacillus weihenstephanensis)).